The sequence spans 1022 residues: GPI ethanolamine phosphate transferase 1 (1022 aa).

Residues 1-6 (MARVGR) are Cytoplasmic-facing. Residues 7-27 (VGFLTLAVVFHLMYAYSIFDI) form a helical membrane-spanning segment. The Lumenal segment spans residues 28–466 (YFVSPIVSGM…LQTYDWLFLR (439 aa)). N-linked (GlcNAc...) asparagine glycans are attached at residues Asn-148 and Asn-433. A helical transmembrane segment spans residues 467–487 (TIVSLGYLGWIAYALTTVIDL). At 488-498 (HVLHGKSESNR) the chain is on the cytoplasmic side. The chain crosses the membrane as a helical span at residues 499 to 519 (TTFSIMFFSSILVALFSVLLY). Topologically, residues 520 to 560 (QGSSWRYYLYALFPIFFWEEVFARRKALLAGREILLGHVHS) are lumenal. Residues 561 to 581 (VSGYFAFAIQLLLYVGVLEAL) form a helical membrane-spanning segment. At 582 to 589 (VQSYFHRD) the chain is on the cytoplasmic side. The chain crosses the membrane as a helical span at residues 590–610 (IFTVCFILGGFWPITYGTKFL). Residues 611–614 (GQHK) lie on the Lumenal side of the membrane. The chain crosses the membrane as a helical span at residues 615-635 (LLSASWALGCFLMSIFTLLPA). Residues 636–640 (NKVED) are Cytoplasmic-facing. The helical transmembrane segment at 641-661 (MMMISCGSLLMFLTGLLYLIF) threads the bilayer. The Lumenal portion of the chain corresponds to 662–685 (ERSILGQKRSSDPNSVVSSCGSRT). The chain crosses the membrane as a helical span at residues 686-706 (IMGAQVGMILLALIVTRSSVA). Residues 707-713 (SLQAKQG) are Cytoplasmic-facing. The chain crosses the membrane as a helical span at residues 714 to 734 (LPLGNQVLGWAILVSSLLLPF). The Lumenal portion of the chain corresponds to 735-749 (LHRLYPNSHYLHRLM). The next 2 membrane-spanning stretches (helical) occupy residues 750 to 770 (VIFL…EGLF) and 771 to 791 (YFVF…IYIH). The Lumenal segment spans residues 792-837 (TTAPTREQDHSVANGSLPAKKPSPGNTVVVEGQPYRYRTLSVSDAR). N-linked (GlcNAc...) asparagine glycosylation occurs at Asn-805. A helical transmembrane segment spans residues 838–858 (VALFFFFLLQSGFFSTGNIAS). Over 859-880 (VSSFSLDSVYRLIPIFNPFAQG) the chain is Cytoplasmic. The helical transmembrane segment at 881 to 901 (ALLILKLLIPFAIISANLGIL) threads the bilayer. At 902–910 (NHRLEVAPS) the chain is on the lumenal side. The chain crosses the membrane as a helical span at residues 911 to 931 (ALFMVVMSISDVMTLNFFYMV). Topologically, residues 932 to 947 (RDEGSWLEIGTTISHF) are cytoplasmic. A helical transmembrane segment spans residues 948–968 (CIASFLCTFVAVLEFLSELFI). The Lumenal portion of the chain corresponds to 969–1022 (SGVDFGHPATTVGSAVAKAVNGSVACGHSPDSDISGEDSTSVGITAKADPDARS). A glycan (N-linked (GlcNAc...) asparagine) is linked at Asn-989. The interval 998-1022 (PDSDISGEDSTSVGITAKADPDARS) is disordered.

The protein belongs to the PIGG/PIGN/PIGO family. PIGN subfamily.

Its subcellular location is the endoplasmic reticulum membrane. It participates in glycolipid biosynthesis; glycosylphosphatidylinositol-anchor biosynthesis. Functionally, ethanolamine phosphate transferase involved in glycosylphosphatidylinositol-anchor biosynthesis. Transfers ethanolamine phosphate to the first alpha-1,4-linked mannose of the glycosylphosphatidylinositol precursor of GPI-anchor. The polypeptide is GPI ethanolamine phosphate transferase 1 (mcd4) (Aspergillus oryzae (strain ATCC 42149 / RIB 40) (Yellow koji mold)).